Reading from the N-terminus, the 205-residue chain is Ephrin-A1 (205 aa).

The signal sequence occupies residues 1 to 17 (MEFLWAPLLGLCCSLAA). An Ephrin RBD domain is found at 18 to 151 (ADRHIVFWNS…KLKVTVNGKI (134 aa)). A glycan (N-linked (GlcNAc...) asparagine) is linked at Asn-26. 2 disulfide bridges follow: Cys-51/Cys-92 and Cys-80/Cys-140. Ser-182 is lipidated: GPI-anchor amidated serine. The propeptide at 183–205 (AAPRLFPLVWAVLLLPLLLLQTQ) is removed in mature form.

Belongs to the ephrin family. As to quaternary structure, monomer. Homodimer. Forms heterodimers with EPHA2. Binds to the receptor tyrosine kinases EPHA2, EPHA3, EPHA4, EPHA5, EPHA6 and EPHA7. Also binds with low affinity to EPHA1. Post-translationally, undergoes proteolysis by a metalloprotease to give rise to a soluble monomeric form. In terms of processing, N-Glycosylation is required for binding to EPHA2 receptor and inducing its internalization.

It localises to the cell membrane. The protein localises to the secreted. Cell surface GPI-bound ligand for Eph receptors, a family of receptor tyrosine kinases which are crucial for migration, repulsion and adhesion during neuronal, vascular and epithelial development. Binds promiscuously Eph receptors residing on adjacent cells, leading to contact-dependent bidirectional signaling into neighboring cells. Plays an important role in angiogenesis and tumor neovascularization. The recruitment of VAV2, VAV3 and PI3-kinase p85 subunit by phosphorylated EPHA2 is critical for EFNA1-induced RAC1 GTPase activation and vascular endothelial cell migration and assembly. Exerts anti-oncogenic effects in tumor cells through activation and down-regulation of EPHA2. Activates EPHA2 by inducing tyrosine phosphorylation which leads to its internalization and degradation. Acts as a negative regulator in the tumorigenesis of gliomas by down-regulating EPHA2 and FAK. Can evoke collapse of embryonic neuronal growth cone and regulates dendritic spine morphogenesis. This is Ephrin-A1 (Efna1) from Rattus norvegicus (Rat).